A 196-amino-acid polypeptide reads, in one-letter code: dITP/XTP pyrophosphatase (196 aa).

Residue 7 to 12 (TGNAGK) coordinates substrate. Mg(2+) is bound by residues E39 and D68. Catalysis depends on D68, which acts as the Proton acceptor. Residues S69, 153–156 (HGYD), K176, and 181–182 (HR) each bind substrate.

It belongs to the HAM1 NTPase family. In terms of assembly, homodimer. Mg(2+) is required as a cofactor.

It catalyses the reaction XTP + H2O = XMP + diphosphate + H(+). It carries out the reaction dITP + H2O = dIMP + diphosphate + H(+). The catalysed reaction is ITP + H2O = IMP + diphosphate + H(+). Its function is as follows. Pyrophosphatase that catalyzes the hydrolysis of nucleoside triphosphates to their monophosphate derivatives, with a high preference for the non-canonical purine nucleotides XTP (xanthosine triphosphate), dITP (deoxyinosine triphosphate) and ITP. Seems to function as a house-cleaning enzyme that removes non-canonical purine nucleotides from the nucleotide pool, thus preventing their incorporation into DNA/RNA and avoiding chromosomal lesions. This chain is dITP/XTP pyrophosphatase, found in Thioalkalivibrio sulfidiphilus (strain HL-EbGR7).